A 431-amino-acid polypeptide reads, in one-letter code: RbAp48-related WD40 repeat-containing protein prw1 (431 aa).

WD repeat units follow at residues 127–159 (SHPE…LVFD), 182–213 (KHTQ…SCWD), 232–263 (SHEK…HVHD), 279–310 (AHSG…ALWD), 323–354 (GHED…LVWD), and 380–411 (GHTS…QIWT).

This sequence belongs to the WD repeat HIR1 family. As to quaternary structure, heterotetramer of alp13, clr6, prw1 and pst2.

The protein resides in the nucleus. Functionally, has a role in chromatin assembly and chromosome segregation. Involved in the deacetylation of histones. In Schizosaccharomyces pombe (strain 972 / ATCC 24843) (Fission yeast), this protein is RbAp48-related WD40 repeat-containing protein prw1 (prw1).